The following is a 212-amino-acid chain: Ribosomal RNA large subunit methyltransferase E (212 aa).

Gly-57, Trp-59, Asp-77, Asp-93, and Asp-122 together coordinate S-adenosyl-L-methionine. Residue Lys-162 is the Proton acceptor of the active site.

Belongs to the class I-like SAM-binding methyltransferase superfamily. RNA methyltransferase RlmE family.

The protein localises to the cytoplasm. It catalyses the reaction uridine(2552) in 23S rRNA + S-adenosyl-L-methionine = 2'-O-methyluridine(2552) in 23S rRNA + S-adenosyl-L-homocysteine + H(+). Its function is as follows. Specifically methylates the uridine in position 2552 of 23S rRNA at the 2'-O position of the ribose in the fully assembled 50S ribosomal subunit. The polypeptide is Ribosomal RNA large subunit methyltransferase E (Coxiella burnetii (strain RSA 331 / Henzerling II)).